Here is a 59-residue protein sequence, read N- to C-terminus: UPF0434 protein Mmc1_0910 (59 aa).

The protein belongs to the UPF0434 family.

This is UPF0434 protein Mmc1_0910 from Magnetococcus marinus (strain ATCC BAA-1437 / JCM 17883 / MC-1).